Here is a 193-residue protein sequence, read N- to C-terminus: Acyl carrier protein phosphodiesterase (193 aa).

The protein belongs to the AcpH family.

The catalysed reaction is holo-[ACP] + H2O = apo-[ACP] + (R)-4'-phosphopantetheine + H(+). Converts holo-ACP to apo-ACP by hydrolytic cleavage of the phosphopantetheine prosthetic group from ACP. This Salmonella newport (strain SL254) protein is Acyl carrier protein phosphodiesterase.